The following is a 67-amino-acid chain: Putative antitoxin PF1308 (67 aa).

This sequence belongs to the UPF0165 family.

In terms of biological role, possibly the antitoxin component of a type II toxin-antitoxin (TA) system. The sequence is that of Putative antitoxin PF1308 from Pyrococcus furiosus (strain ATCC 43587 / DSM 3638 / JCM 8422 / Vc1).